Here is a 149-residue protein sequence, read N- to C-terminus: Large ribosomal subunit protein uL11 (149 aa).

The protein belongs to the universal ribosomal protein uL11 family. In terms of assembly, part of the ribosomal stalk of the 50S ribosomal subunit. Interacts with L10 and the large rRNA to form the base of the stalk. L10 forms an elongated spine to which L12 dimers bind in a sequential fashion forming a multimeric L10(L12)X complex. In terms of processing, one or more lysine residues are methylated.

Forms part of the ribosomal stalk which helps the ribosome interact with GTP-bound translation factors. The sequence is that of Large ribosomal subunit protein uL11 from Methylobacterium nodulans (strain LMG 21967 / CNCM I-2342 / ORS 2060).